We begin with the raw amino-acid sequence, 380 residues long: Large ribosomal subunit protein mL38 (380 aa).

Residues 1–26 constitute a mitochondrion transit peptide; the sequence is MAAPWWRAAFSVTGRCRGISTSASLS. Residues 98 to 123 adopt a coiled-coil conformation; it reads SRTQKLQERKRFLQELRANSEEERAA.

This sequence belongs to the phosphatidylethanolamine-binding protein family. Mitochondrion-specific ribosomal protein mL38 subfamily. Component of the mitochondrial ribosome large subunit (39S) which comprises a 16S rRNA and about 50 distinct proteins.

It localises to the mitochondrion. This Rattus norvegicus (Rat) protein is Large ribosomal subunit protein mL38 (Mrpl38).